Reading from the N-terminus, the 198-residue chain is MEFYPVAIEKLIEEFAKLPGVGYKTAQRLTMHVLNLPKEEVEGFADALKKARGTIKYCSVCGNYTDTDPCAICSNPNRDKSLVCVVEEPKDIISMEKVREFNGVYHVLHGVISPMLGKGPDSIKLRELVSRMNGKVKEVIVATNPNVDGEATAMYISKILKPLGVKVTRIAHGIPVGGDLEYADEVTLAKALEGRREI.

The C4-type zinc-finger motif lies at 58-73 (CSVCGNYTDTDPCAIC). The Toprim domain maps to 81-175 (SLVCVVEEPK…KVTRIAHGIP (95 aa)).

This sequence belongs to the RecR family.

Its function is as follows. May play a role in DNA repair. It seems to be involved in an RecBC-independent recombinational process of DNA repair. It may act with RecF and RecO. This chain is Recombination protein RecR, found in Clostridium acetobutylicum (strain ATCC 824 / DSM 792 / JCM 1419 / IAM 19013 / LMG 5710 / NBRC 13948 / NRRL B-527 / VKM B-1787 / 2291 / W).